A 378-amino-acid polypeptide reads, in one-letter code: Alanine racemase (378 aa).

Lysine 40 (proton acceptor; specific for D-alanine) is an active-site residue. Position 40 is an N6-(pyridoxal phosphate)lysine (lysine 40). Arginine 140 contacts substrate. Residue tyrosine 270 is the Proton acceptor; specific for L-alanine of the active site. Methionine 317 contributes to the substrate binding site.

The protein belongs to the alanine racemase family. Pyridoxal 5'-phosphate is required as a cofactor.

It carries out the reaction L-alanine = D-alanine. The protein operates within amino-acid biosynthesis; D-alanine biosynthesis; D-alanine from L-alanine: step 1/1. Functionally, catalyzes the interconversion of L-alanine and D-alanine. May also act on other amino acids. This chain is Alanine racemase (alr), found in Lacticaseibacillus casei (strain BL23) (Lactobacillus casei).